The sequence spans 200 residues: Recombination protein RecR (200 aa).

Residues 59–74 (CEVCGNVCESSPCTIC) form a C4-type zinc finger. The Toprim domain maps to 82–177 (GTICVVEEPK…KVTRLASGLP (96 aa)).

The protein belongs to the RecR family.

In terms of biological role, may play a role in DNA repair. It seems to be involved in an RecBC-independent recombinational process of DNA repair. It may act with RecF and RecO. The polypeptide is Recombination protein RecR (Bifidobacterium animalis subsp. lactis (strain AD011)).